A 139-amino-acid polypeptide reads, in one-letter code: D-ribose pyranase (139 aa).

The active-site Proton donor is H20. Residues D28, H106, and 128 to 130 contribute to the substrate site; that span reads YAN.

It belongs to the RbsD / FucU family. RbsD subfamily. Homodecamer.

It is found in the cytoplasm. It carries out the reaction beta-D-ribopyranose = beta-D-ribofuranose. It functions in the pathway carbohydrate metabolism; D-ribose degradation; D-ribose 5-phosphate from beta-D-ribopyranose: step 1/2. Catalyzes the interconversion of beta-pyran and beta-furan forms of D-ribose. In Photorhabdus laumondii subsp. laumondii (strain DSM 15139 / CIP 105565 / TT01) (Photorhabdus luminescens subsp. laumondii), this protein is D-ribose pyranase.